Reading from the N-terminus, the 334-residue chain is Broad-range acid phosphatase DET1 (334 aa).

His-32 acts as the Tele-phosphohistidine intermediate in catalysis. Substrate is bound by residues Asn-38, 44-45, and Arg-108; that span reads NG. The active-site Proton donor/acceptor is the Glu-126. Substrate contacts are provided by residues 168–171 and 195–205; these read LNNT and RVKDEPRIREQ. Ser-248 is modified (phosphoserine).

It belongs to the phosphoglycerate mutase family.

The protein resides in the cytoplasm. It localises to the nucleus. Metal-independent, broad-range acid phosphatase. Involved, either directly or indirectly, in the bidirectional transport of sterols between the endoplasmic reticulum and the plasma membrane. The polypeptide is Broad-range acid phosphatase DET1 (DET1) (Saccharomyces cerevisiae (strain ATCC 204508 / S288c) (Baker's yeast)).